The primary structure comprises 376 residues: ATP phosphoribosyltransferase regulatory subunit (376 aa).

This sequence belongs to the class-II aminoacyl-tRNA synthetase family. HisZ subfamily. As to quaternary structure, heteromultimer composed of HisG and HisZ subunits.

It is found in the cytoplasm. The protein operates within amino-acid biosynthesis; L-histidine biosynthesis; L-histidine from 5-phospho-alpha-D-ribose 1-diphosphate: step 1/9. In terms of biological role, required for the first step of histidine biosynthesis. May allow the feedback regulation of ATP phosphoribosyltransferase activity by histidine. The protein is ATP phosphoribosyltransferase regulatory subunit of Brucella canis (strain ATCC 23365 / NCTC 10854 / RM-666).